A 596-amino-acid chain; its full sequence is Elongation factor 4 (596 aa).

One can recognise a tr-type G domain in the interval Arg2 to Lys184. GTP contacts are provided by residues Asp14–Thr19 and Asn131–Asp134.

This sequence belongs to the TRAFAC class translation factor GTPase superfamily. Classic translation factor GTPase family. LepA subfamily.

It localises to the cell inner membrane. The enzyme catalyses GTP + H2O = GDP + phosphate + H(+). Required for accurate and efficient protein synthesis under certain stress conditions. May act as a fidelity factor of the translation reaction, by catalyzing a one-codon backward translocation of tRNAs on improperly translocated ribosomes. Back-translocation proceeds from a post-translocation (POST) complex to a pre-translocation (PRE) complex, thus giving elongation factor G a second chance to translocate the tRNAs correctly. Binds to ribosomes in a GTP-dependent manner. The sequence is that of Elongation factor 4 from Xanthomonas euvesicatoria pv. vesicatoria (strain 85-10) (Xanthomonas campestris pv. vesicatoria).